A 470-amino-acid polypeptide reads, in one-letter code: Siroheme synthase 2 (470 aa).

A precorrin-2 dehydrogenase /sirohydrochlorin ferrochelatase region spans residues 1-202 (MDYLPMFAKL…EDWQGAEQWL (202 aa)). Residues 22 to 23 (EV) and 43 to 44 (PE) each bind NAD(+). S126 is subject to Phosphoserine. Residues 214-470 (GEVVLVGAGP…TCDLKLVSLA (257 aa)) are uroporphyrinogen-III C-methyltransferase. P223 provides a ligand contact to S-adenosyl-L-methionine. Residue D246 is the Proton acceptor of the active site. The active-site Proton donor is the K268. Residues 299–301 (GGD), 329–330 (TA), M381, and G410 contribute to the S-adenosyl-L-methionine site.

It in the N-terminal section; belongs to the precorrin-2 dehydrogenase / sirohydrochlorin ferrochelatase family. The protein in the C-terminal section; belongs to the precorrin methyltransferase family.

The enzyme catalyses uroporphyrinogen III + 2 S-adenosyl-L-methionine = precorrin-2 + 2 S-adenosyl-L-homocysteine + H(+). It carries out the reaction precorrin-2 + NAD(+) = sirohydrochlorin + NADH + 2 H(+). The catalysed reaction is siroheme + 2 H(+) = sirohydrochlorin + Fe(2+). Its pathway is cofactor biosynthesis; adenosylcobalamin biosynthesis; precorrin-2 from uroporphyrinogen III: step 1/1. The protein operates within cofactor biosynthesis; adenosylcobalamin biosynthesis; sirohydrochlorin from precorrin-2: step 1/1. It functions in the pathway porphyrin-containing compound metabolism; siroheme biosynthesis; precorrin-2 from uroporphyrinogen III: step 1/1. It participates in porphyrin-containing compound metabolism; siroheme biosynthesis; siroheme from sirohydrochlorin: step 1/1. Its pathway is porphyrin-containing compound metabolism; siroheme biosynthesis; sirohydrochlorin from precorrin-2: step 1/1. Its function is as follows. Multifunctional enzyme that catalyzes the SAM-dependent methylations of uroporphyrinogen III at position C-2 and C-7 to form precorrin-2 via precorrin-1. Then it catalyzes the NAD-dependent ring dehydrogenation of precorrin-2 to yield sirohydrochlorin. Finally, it catalyzes the ferrochelation of sirohydrochlorin to yield siroheme. This Aeromonas hydrophila subsp. hydrophila (strain ATCC 7966 / DSM 30187 / BCRC 13018 / CCUG 14551 / JCM 1027 / KCTC 2358 / NCIMB 9240 / NCTC 8049) protein is Siroheme synthase 2.